The primary structure comprises 159 residues: Small ribosomal subunit protein uS7 (159 aa).

Belongs to the universal ribosomal protein uS7 family. As to quaternary structure, part of the 30S ribosomal subunit. Contacts proteins S9 and S11.

One of the primary rRNA binding proteins, it binds directly to 16S rRNA where it nucleates assembly of the head domain of the 30S subunit. Is located at the subunit interface close to the decoding center, probably blocks exit of the E-site tRNA. The sequence is that of Small ribosomal subunit protein uS7 from Sulfurihydrogenibium sp. (strain YO3AOP1).